Reading from the N-terminus, the 207-residue chain is High frequency lysogenization protein HflD homolog (207 aa).

Belongs to the HflD family.

The protein resides in the cytoplasm. The protein localises to the cell inner membrane. The polypeptide is High frequency lysogenization protein HflD homolog (Pseudomonas fluorescens (strain SBW25)).